A 471-amino-acid chain; its full sequence is MTTEAAVLDYKVADISLAEWGRKEIEIAEKEMPGLMATRKKYEGKKPLAGARIAGSLHMTIQTAVLIETLVELGADVRWASCNIFSTQDHAAAAIAAAGVPVFAWKGETLDEYWWCTRQILEFEGGLGPNLIVDDGGDATLMIHLGYKIENDPSMLDKTPGNAEERALFAQLKEVFAEDNQRWHKVAAGMKGVSEETTTGVHRLYQMMEKGELLFPAINVNDSVTKSKFDNLYGCRESLADGIKRATDVMIAGKVAVVLGYGDVGKGCAHSMRSYGARVIVTEIDPICALQAAMEGFQVTTIEEALEEGNIYVTTTGNKDVITLEHMKKMKDEAIVCNIGHFDNEIQVDALNNFKGATRINIKPQVDKYVFEDGRCIYLLAEGRLVNLGCATGHPSFVMSNSFTNQTLAQIELWKNNYDVDVYRLPKHLDEEVARLHLGQIGVKLTTLSKEQADYIGVPVEGPYKPEHYRY.

Substrate contacts are provided by threonine 60, aspartate 135, and glutamate 196. 197-199 (TTT) is a binding site for NAD(+). Positions 226 and 230 each coordinate substrate. NAD(+) is bound by residues asparagine 231, 260–265 (GYGDVG), glutamate 283, asparagine 318, 339–341 (IGH), and asparagine 387.

Belongs to the adenosylhomocysteinase family. The cofactor is NAD(+).

It is found in the cytoplasm. It catalyses the reaction S-adenosyl-L-homocysteine + H2O = L-homocysteine + adenosine. Its pathway is amino-acid biosynthesis; L-homocysteine biosynthesis; L-homocysteine from S-adenosyl-L-homocysteine: step 1/1. In terms of biological role, may play a key role in the regulation of the intracellular concentration of adenosylhomocysteine. The chain is Adenosylhomocysteinase from Chlorobaculum parvum (strain DSM 263 / NCIMB 8327) (Chlorobium vibrioforme subsp. thiosulfatophilum).